A 303-amino-acid chain; its full sequence is UDP-N-acetylenolpyruvoylglucosamine reductase (303 aa).

The region spanning 28–195 is the FAD-binding PCMH-type domain; that stretch reads KTGGPAQYLA…ISATFGLEPG (168 aa). Arg-174 is an active-site residue. The active-site Proton donor is Ser-224. Glu-294 is an active-site residue.

It belongs to the MurB family. Requires FAD as cofactor.

It localises to the cytoplasm. The catalysed reaction is UDP-N-acetyl-alpha-D-muramate + NADP(+) = UDP-N-acetyl-3-O-(1-carboxyvinyl)-alpha-D-glucosamine + NADPH + H(+). Its pathway is cell wall biogenesis; peptidoglycan biosynthesis. Its function is as follows. Cell wall formation. The polypeptide is UDP-N-acetylenolpyruvoylglucosamine reductase (Lactobacillus gasseri (strain ATCC 33323 / DSM 20243 / BCRC 14619 / CIP 102991 / JCM 1131 / KCTC 3163 / NCIMB 11718 / NCTC 13722 / AM63)).